Reading from the N-terminus, the 186-residue chain is UPF0303 protein ZMO1353 (186 aa).

The protein belongs to the UPF0303 family.

This is UPF0303 protein ZMO1353 from Zymomonas mobilis subsp. mobilis (strain ATCC 31821 / ZM4 / CP4).